We begin with the raw amino-acid sequence, 346 residues long: Histone PARylation factor 1 (346 aa).

Methionine 1 is subject to N-acetylmethionine. The tract at residues 1 to 23 (MVGGGGKRRPGGEGPQCEKTTDV) is disordered. Lysine 19 is modified (N6-acetyllysine). Serine 97 is modified (ADP-ribosylserine). N6-acetyllysine occurs at positions 186 and 233. At aspartate 235 the chain carries PolyADP-ribosyl aspartic acid. At tyrosine 238 the chain carries ADP-ribosyltyrosine. Position 240 is a polyADP-ribosyl glutamic acid (glutamate 240). The interval 242–346 (PETDADLKRI…SQENIDQLAA (105 aa)) is interaction with PARP1. The active-site Proton donor is the glutamate 284.

Belongs to the HPF1 family. As to quaternary structure, interacts with PARP1 (via the PARP catalytic domain). Interacts with PARP2 (via the PARP catalytic domain). Interacts with core nucleosomes in a PARP1- and PARP2-dependent manner.

It is found in the chromosome. Its subcellular location is the nucleus. Functionally, cofactor for serine ADP-ribosylation that confers serine specificity on PARP1 and PARP2 and plays a key role in DNA damage response. Initiates the repair of double-strand DNA breaks: recruited to DNA damage sites by PARP1 and PARP2 and switches the amino acid specificity of PARP1 and PARP2 from aspartate or glutamate to serine residues, licensing serine ADP-ribosylation of target proteins. Serine ADP-ribosylation of target proteins, such as histones, promotes decompaction of chromatin and the recruitment of repair factors leading to the reparation of DNA strand breaks. Serine ADP-ribosylation of proteins constitutes the primary form of ADP-ribosylation of proteins in response to DNA damage. HPF1 acts by completing the active site of PARP1 and PARP2: forms a composite active site composed of residues from HPF1 and PARP1 or PARP2. While HPF1 promotes the initiation of serine ADP-ribosylation, it restricts the polymerase activity of PARP1 and PARP2 in order to limit the length of poly-ADP-ribose chains. HPF1 also promotes tyrosine ADP-ribosylation, probably by conferring tyrosine specificity on PARP1. In Homo sapiens (Human), this protein is Histone PARylation factor 1.